Consider the following 570-residue polypeptide: uncharacterized protein (570 aa).

The span at 1-15 (MTESIISSRTASISS) shows a compositional bias: low complexity. A disordered region spans residues 1–34 (MTESIISSRTASISSKEGYEIRQGSTDSSSLDLE). Ser-14 carries the phosphoserine modification. 12 consecutive transmembrane segments (helical) span residues 96–116 (WKLYIYLLLMLGFLDMMLFIG), 141–161 (NLNTLFYVGYIVGQFPGHYIM), 163–183 (TFPLGKFVGLVTFSWSVIVFL), 198–218 (FFLGFTESCLLPAMEATMGMF), 229–249 (PVFWISCLSCGIPAGFIAYGL), 261–281 (LFMIITGGITFFLSIFLFFYY), 328–348 (PITWLFTFAAFTLMLSNNLAY), 369–389 (VALAGYNTVSAIIATFAMYLI), 397–417 (AMFWMLPSITGGIAFVALPWS), 423–443 (LATMIIASDFGITYIIALGWT), 457–477 (GLMFMVGYAIANIISPQLWQS), and 485–505 (PAWIVQIVVAWFVTPIIYLVA).

It belongs to the major facilitator superfamily. Allantoate permease family.

The protein resides in the endoplasmic reticulum. Its subcellular location is the membrane. This is an uncharacterized protein from Schizosaccharomyces pombe (strain 972 / ATCC 24843) (Fission yeast).